Reading from the N-terminus, the 4074-residue chain is Fibrocystin (4074 aa).

The signal sequence occupies residues 1 to 22 (MIVWLISLMSIEILLLAGPALS). 2 N-linked (GlcNAc...) asparagine glycosylation sites follow: asparagine 54 and asparagine 224. The region spanning 258-310 (EILSVFPETGSLGGKTDIIITGDFFDNPALVTIAGVPCDIRHMSPRKIECTTR) is the IPT/TIG 1 domain. The region spanning 323-483 (AGNRGLLFEV…TWLNPDVVST (161 aa)) is the PA14 domain. Asparagine 355, asparagine 385, asparagine 518, asparagine 527, asparagine 640, asparagine 710, asparagine 741, asparagine 822, asparagine 829, asparagine 868, asparagine 953, asparagine 966, asparagine 976, asparagine 1006, asparagine 1059, asparagine 1083, asparagine 1115, asparagine 1134, asparagine 1233, asparagine 1240, asparagine 1274, asparagine 1284, asparagine 1308, asparagine 1319, asparagine 1342, asparagine 1373, asparagine 1445, asparagine 1456, asparagine 1471, asparagine 1490, asparagine 1528, asparagine 1560, asparagine 1578, asparagine 1598, asparagine 1627, asparagine 1694, asparagine 1760, asparagine 1775, asparagine 1789, asparagine 1875, asparagine 1915, asparagine 1941, asparagine 1955, asparagine 2030, asparagine 2111, and asparagine 2140 each carry an N-linked (GlcNAc...) asparagine glycan. An IPT/TIG 2 domain is found at 944–1000 (SLLIYIFGINFSGDPQALEIMVNKTNCKVIFSNQTNVICQTDLLPVGMHRLFMVVRP). IPT/TIG domains follow at residues 1018-1101 (PRLD…AFTY), 1107-1186 (PVIT…RSPG), and 1199-1274 (SIEP…WAGN). The IPT/TIG 6 domain occupies 1385-1464 (PWIMAISPTH…LNVTVIVNGL (80 aa)). The region spanning 1573 to 1641 (HYFPKNFSIH…LVIEVDGLSY (69 aa)) is the IPT/TIG 7 domain. A G8 1 domain is found at 1928 to 2049 (HSWFPERVPQ…PEVTFTHLQA (122 aa)). 5 PbH1 repeats span residues 2245 to 2267 (TLGL…LVGT), 2288 to 2322 (EQGN…YILN), 2351 to 2373 (APLL…FIYP), 2383 to 2404 (RGPT…RISR), and 2405 to 2427 (SSNL…DILE). A glycan (N-linked (GlcNAc...) asparagine) is linked at asparagine 2390. Residues asparagine 2431, asparagine 2467, asparagine 2531, asparagine 2549, asparagine 2579, asparagine 2591, asparagine 2749, asparagine 2764, asparagine 2972, and asparagine 3004 are each glycosylated (N-linked (GlcNAc...) asparagine). One copy of the PbH1 6 repeat lies at 2460 to 2483 (RWELIISNTTFVNFDLTDCVSIRT). Residues 2743-2869 (EGWGGHNHTI…PKKSWTRLAA (127 aa)) enclose the G8 2 domain. The PbH1 7 repeat unit spans residues 3029-3051 (SHGIILNDNIVFGTVGHGIDLEG). N-linked (GlcNAc...) asparagine glycosylation is present at asparagine 3053. Residues 3082-3104 (AKDINLYGNVVAGSERIGFHIQG) form a PbH1 8 repeat. N-linked (GlcNAc...) asparagine glycans are attached at residues asparagine 3136, asparagine 3165, asparagine 3221, asparagine 3484, asparagine 3702, asparagine 3721, and asparagine 3833. The PbH1 9 repeat unit spans residues 3158–3183 (ENSVEIENITLVDNSIGLLATVYVSS). The chain crosses the membrane as a helical span at residues 3854-3874 (IILAVSLCSVASWLALCCLVC). Residues 3871–3888 (CLVCCWFRKSKSRKIKSE) are ciliary targeting sequence (CST). 3 disordered regions span residues 3896 to 3919 (NDQK…KEDT), 3943 to 3965 (NGVS…REED), and 4031 to 4074 (LQGQ…QEQL). Composition is skewed to basic and acidic residues over residues 3910 to 3919 (RSQETKKEDT) and 3954 to 3965 (AVREEGSSREED). The tract at residues 3947 to 3976 (RRKVSRRAVREEGSSREEDVVPAPRIISIT) is nuclear localization signal (NLS).

In terms of assembly, interacts with CAMLG. Interacts with PKD2. Interacts (via CST) with ARF4; this interaction allows an efficient PKHD1 trafficking to the cilium. Interacts (via CST) with RAB8A; this interaction controls trafficking through the endomembrane systeme and to the cilium. Interacts (via CST) with TULP3; this interaction allows PKHD1 trafficking to the cilium. Post-translationally, palmitoylated. Palmitoylation facilitates the trafficking to the cilia and membrane targeting. In terms of processing, N-glycosylated. Several proteolytic cleavages occur within the extracellular domain, whereas at least one cleavage occurs within the cytoplasmic domain. Cleaved by a probable proprotein convertase which produces an extracellular domain (polyductin extracellular domain, (PECD)) and a C-terminal fragment (polyductin transmembrane fragment (PTM)) which are tethered together by disulfide bonds. This extracellular domain (PECD) is then shed from the primary cilium by activation of a member of the ADAM metalloproteinase disintegrins family, resulting in concomitant release of an intra-cellular C-terminal fragment (ICD) via a gamma-secretase-dependent process. The proteolytic cleavage of the C-terminal intracellular fragment (ICD) is controlled by cytosolic calcium concentration and activation of PKC.

It is found in the cell membrane. It localises to the cytoplasm. The protein localises to the apical cell membrane. The protein resides in the cytoskeleton. Its subcellular location is the cilium basal body. It is found in the cell projection. It localises to the cilium. The protein localises to the spindle. The protein resides in the chromosome. Its subcellular location is the centromere. It is found in the nucleus. It localises to the secreted. The protein localises to the extracellular exosome. The protein resides in the endoplasmic reticulum. Its subcellular location is the golgi apparatus. Promotes ciliogenesis in renal epithelial cells and therefore participates in the tubules formation and/ or ensures the maintenance of the architecture of the lumen of the kidney. Has an impact on cellular symmetry by ensuring correct bipolar cell division through the regulation of centrosome duplication and mitotic spindle assembly and by maintaining oriented cell division (OCD) during tubular elongation through planar cell polarity (PCP) pathway. During epithelial cell morphogenesis, it also regulates cell-cell and cell-matrix adhesion and participates in cell motility. Promotes cell-cell contact through the positive regulation of PTK2 kinase activity leading to either positive regulation of epithelial cell proliferation through the HRAS/RAF1 pathways, or negative regulation of apoptosis through the PDK1/AKT1 pathway. May act in collecting-duct and biliary differentiation. May participate in the regulation of the cholangiocytes proliferation and the CCN2 production in an CXCL8-dependent manner. This chain is Fibrocystin, found in Canis lupus familiaris (Dog).